The primary structure comprises 742 residues: G2/M phase-specific E3 ubiquitin-protein ligase (742 aa).

Residues 10–50 form a C2HC pre-PHD-type zinc finger; that stretch reads SPPCVLCGWTDNCPEKYGEKRTYVEYNLTLHNYCLLMSSGI. Residues 78 to 127 form a PHD-type 1 zinc finger; it reads LMCNICRKKGASIGCVAPKCKRSYHFPCGLQKECVFQFMEDFRSYCWEHK. The segment at 142 to 192 adopts a PHD-type 2; degenerate zinc-finger fold; the sequence is QCTICLDLVEHLPLYSVLRSPCCKNTWFHRECLQYQALSAGIFFFRCAVCN. A PHD-type 3 zinc finger spans residues 236-285; that stretch reads RCLCKNGRDYNKPDSKWEIKRCQSCGSRGTHLACSSIKSWEQNWECVECR. One can recognise an HECT domain in the interval 417 to 742; the sequence is KGFRQRNFRP…IRSTLRGERE (326 aa).

It is found in the nucleus. The protein localises to the nucleolus. Its subcellular location is the cytoplasm. It catalyses the reaction S-ubiquitinyl-[E2 ubiquitin-conjugating enzyme]-L-cysteine + [acceptor protein]-L-lysine = [E2 ubiquitin-conjugating enzyme]-L-cysteine + N(6)-ubiquitinyl-[acceptor protein]-L-lysine.. It functions in the pathway protein modification; protein ubiquitination. Its function is as follows. E3 ubiquitin-protein ligase which accepts ubiquitin from an E2 ubiquitin-conjugating enzyme in the form of a thioester and then directly transfers the ubiquitin to targeted substrates. Essential in early embryonic development to prevent apoptotic death. In Gallus gallus (Chicken), this protein is G2/M phase-specific E3 ubiquitin-protein ligase (G2E3).